A 61-amino-acid chain; its full sequence is Small ribosomal subunit protein uS14 (61 aa).

Zn(2+) is bound by residues Cys-24, Cys-27, Cys-40, and Cys-43.

This sequence belongs to the universal ribosomal protein uS14 family. Zinc-binding uS14 subfamily. Part of the 30S ribosomal subunit. Contacts proteins S3 and S10. The cofactor is Zn(2+).

Functionally, binds 16S rRNA, required for the assembly of 30S particles and may also be responsible for determining the conformation of the 16S rRNA at the A site. This chain is Small ribosomal subunit protein uS14, found in Deinococcus geothermalis (strain DSM 11300 / CIP 105573 / AG-3a).